The following is a 330-amino-acid chain: MKKSFILQQQEISFVKNTFTQYLIDQLDIIEVQGPILSQVGNGMQDNLSGIEKAVQVNVKCIPGAVFEVVHSLAKWKRHTLARFGFKQGEGLFVHMKALRPDEDSLDPTHSIYVDQWDWEKVIPEGQRNFAYLKQTVNQIYKAIRLTELAVEARFDIPSSLPKQITFIHSEELAQRYPNMSSKERENAICKEHGAIFLIGIGGKLSDGKAHDGRAPDYDDWTTESENGYKGLNGDILVWNEELGSAFELSSMGIRVDQQALRLQVSLTGDEDRLTMDWHQDLLAGRLPLSIGGGIGQSRLVMFLLHKKHIGEVQSSVWPTEMLTQFENIL.

This sequence belongs to the class-II aminoacyl-tRNA synthetase family. AsnA subfamily.

It localises to the cytoplasm. The enzyme catalyses L-aspartate + NH4(+) + ATP = L-asparagine + AMP + diphosphate + H(+). It participates in amino-acid biosynthesis; L-asparagine biosynthesis; L-asparagine from L-aspartate (ammonia route): step 1/1. The chain is Aspartate--ammonia ligase from Haemophilus ducreyi (strain 35000HP / ATCC 700724).